A 587-amino-acid polypeptide reads, in one-letter code: Polyphenol oxidase E, chloroplastic (587 aa).

Residues 1 to 87 constitute a chloroplast transit peptide; sequence MSSSSSITTT…AANLAPLATA (87 aa). 2 disulfides stabilise this stretch: cysteine 98–cysteine 114 and cysteine 113–cysteine 180. Residues histidine 179, histidine 197, histidine 206, histidine 328, histidine 332, and histidine 363 each contribute to the Cu cation site. Residues 183–197 constitute a cross-link (2'-(S-cysteinyl)-histidine (Cys-His)); the sequence is CNGAYKVGGKELQVH.

This sequence belongs to the tyrosinase family. Cu(2+) serves as cofactor.

Its subcellular location is the plastid. It localises to the chloroplast thylakoid lumen. The catalysed reaction is 2 catechol + O2 = 2 1,2-benzoquinone + 2 H2O. In terms of biological role, catalyzes the oxidation of mono- and o-diphenols to o-diquinones. The chain is Polyphenol oxidase E, chloroplastic from Solanum lycopersicum (Tomato).